A 513-amino-acid chain; its full sequence is Chromosomal replication initiator protein DnaA (513 aa).

The tract at residues 1–87 (MSVELWQQCV…IGSKRSSAPR (87 aa)) is domain I, interacts with DnaA modulators. Positions 87–176 (RAAPNAPLAA…QVEGALKHTS (90 aa)) are domain II. Residues 113-163 (AAPAPAPAPTSAPAKKAAAQKAAEVSEEPSRDSFDPMAGASSQQAPVRAEQ) form a disordered region. The segment covering 123–135 (SAPAKKAAAQKAA) has biased composition (low complexity). The domain III, AAA+ region stretch occupies residues 177-393 (YLNRTFTFEN…GALKRVIAHS (217 aa)). ATP-binding residues include Gly221, Gly223, Lys224, and Thr225. The tract at residues 394–513 (HFMGRDITIE…YKNLLRTLTT (120 aa)) is domain IV, binds dsDNA.

It belongs to the DnaA family. Oligomerizes as a right-handed, spiral filament on DNA at oriC.

It localises to the cytoplasm. Functionally, plays an essential role in the initiation and regulation of chromosomal replication. ATP-DnaA binds to the origin of replication (oriC) to initiate formation of the DNA replication initiation complex once per cell cycle. Binds the DnaA box (a 9 base pair repeat at the origin) and separates the double-stranded (ds)DNA. Forms a right-handed helical filament on oriC DNA; dsDNA binds to the exterior of the filament while single-stranded (ss)DNA is stabiized in the filament's interior. The ATP-DnaA-oriC complex binds and stabilizes one strand of the AT-rich DNA unwinding element (DUE), permitting loading of DNA polymerase. After initiation quickly degrades to an ADP-DnaA complex that is not apt for DNA replication. Binds acidic phospholipids. The polypeptide is Chromosomal replication initiator protein DnaA (Pseudomonas fluorescens (strain ATCC BAA-477 / NRRL B-23932 / Pf-5)).